The sequence spans 428 residues: UPF0229 protein YeaH (428 aa).

A compositionally biased stretch (basic and acidic residues) spans Gly-78 to Arg-90. The disordered stretch occupies residues Gly-78 to Glu-111. Gly residues predominate over residues Gln-92–Gln-103.

This sequence belongs to the UPF0229 family.

This chain is UPF0229 protein YeaH, found in Salmonella choleraesuis (strain SC-B67).